Consider the following 313-residue polypeptide: Porphobilinogen deaminase (313 aa).

An S-(dipyrrolylmethanemethyl)cysteine modification is found at C240.

Belongs to the HMBS family. As to quaternary structure, monomer. The cofactor is dipyrromethane.

The catalysed reaction is 4 porphobilinogen + H2O = hydroxymethylbilane + 4 NH4(+). It functions in the pathway porphyrin-containing compound metabolism; protoporphyrin-IX biosynthesis; coproporphyrinogen-III from 5-aminolevulinate: step 2/4. Its function is as follows. Tetrapolymerization of the monopyrrole PBG into the hydroxymethylbilane pre-uroporphyrinogen in several discrete steps. The sequence is that of Porphobilinogen deaminase from Moorella thermoacetica (strain ATCC 39073 / JCM 9320).